A 259-amino-acid polypeptide reads, in one-letter code: MSKREDGRLDHELRPVIITRGFTENPAGSVLIEFGHTKVLCTASVTEGVPRWRKATGLGWLTAEYAMLPSATHSRSDRESVRGRLSGRTQEISRLIGRSLRACIDLAALGENTIAIDCDVLQADGGTRTAAITGAYVALADAVTYLSAAGKLSDPRPLSCAIAAVSVGVVDGRIRVDLPYEEDSRAEVDMNVVATDTGTLVEIQGTGEGATFARSTLDKLLDMALGACDTLFAAQRDALALPYPGVLPQGPPPPKAFGT.

Residues R88 and 126–128 each bind phosphate; that span reads GTR.

Belongs to the RNase PH family. Homohexameric ring arranged as a trimer of dimers.

The catalysed reaction is tRNA(n+1) + phosphate = tRNA(n) + a ribonucleoside 5'-diphosphate. Its function is as follows. Phosphorolytic 3'-5' exoribonuclease that plays an important role in tRNA 3'-end maturation. Removes nucleotide residues following the 3'-CCA terminus of tRNAs; can also add nucleotides to the ends of RNA molecules by using nucleoside diphosphates as substrates, but this may not be physiologically important. Probably plays a role in initiation of 16S rRNA degradation (leading to ribosome degradation) during starvation. The polypeptide is Ribonuclease PH (Mycobacterium bovis (strain BCG / Pasteur 1173P2)).